The following is a 426-amino-acid chain: Oligouridylate-binding protein 1A (426 aa).

The disordered stretch occupies residues 1-26 (MQNQRLIKQQQQQQQQQHQQAMIQQA). Over residues 9-26 (QQQQQQQQQHQQAMIQQA) the composition is skewed to low complexity. RRM domains lie at 63–137 (RSVY…WAYA) and 148–226 (FNIF…WATK). The tract at residues 230–268 (FGEDKHSSDGKSVVELTNGSSEDGRELSNEDAPENNPQF) is disordered. Serine 250 is subject to Phosphoserine. Residues 269 to 344 (TTVYVGNLSP…RQIRCSWGNK (76 aa)) form the RRM 3 domain.

In terms of assembly, interacts with UBA1A and UBA2A.

The protein localises to the nucleus. In terms of biological role, heterogeneous nuclear ribonucleoprotein (hnRNP)-like protein that acts as a component of the pre-mRNA processing machinery. Functions to facilitate the nuclear maturation of plant pre-mRNAs. The polypeptide is Oligouridylate-binding protein 1A (UBP1A) (Arabidopsis thaliana (Mouse-ear cress)).